The sequence spans 142 residues: Large-conductance mechanosensitive channel (142 aa).

2 consecutive transmembrane segments (helical) span residues Val-14–Val-34 and Gly-82–Ile-102.

The protein belongs to the MscL family. In terms of assembly, homopentamer.

It localises to the cell inner membrane. Channel that opens in response to stretch forces in the membrane lipid bilayer. May participate in the regulation of osmotic pressure changes within the cell. The sequence is that of Large-conductance mechanosensitive channel from Sinorhizobium medicae (strain WSM419) (Ensifer medicae).